The chain runs to 649 residues: Pesticidal crystal protein Cry3Ca (649 aa).

The segment covering 1-13 (MNPNNRSEHDTIK) has biased composition (basic and acidic residues). A disordered region spans residues 1-29 (MNPNNRSEHDTIKATENNEVSNNHAQYPL). The span at 14–25 (ATENNEVSNNHA) shows a compositional bias: polar residues.

The protein belongs to the delta endotoxin family.

In terms of biological role, promotes colloidosmotic lysis by binding to the midgut epithelial cells of Coleoptera. This is Pesticidal crystal protein Cry3Ca (cry3Ca) from Bacillus thuringiensis subsp. kurstaki.